We begin with the raw amino-acid sequence, 669 residues long: L-type lectin-domain containing receptor kinase IV.4 (669 aa).

Residues 1-23 form the signal peptide; that stretch reads MFFIKLFTIFFLSFFWQSLKSSS. Residues 24–294 are Extracellular-facing; the sequence is QIIDFTYNGF…TRVYRFYKNW (271 aa). The interval 26–260 is legume-lectin like; sequence IDFTYNGFRP…SEIFVLGWSF (235 aa). Residues asparagine 58, asparagine 80, asparagine 127, asparagine 152, and asparagine 185 are each glycosylated (N-linked (GlcNAc...) asparagine). Residues 295-315 form a helical membrane-spanning segment; the sequence is VPLISLLLIPFLLIIFLVRFI. Residues 316–669 lie on the Cytoplasmic side of the membrane; it reads MKRRRKFAEE…VAYSLLSSGR (354 aa). The Protein kinase domain maps to 350–627; the sequence is FKDKNILGSG…LQYLRGDAML (278 aa). Residues 356–364 and lysine 379 contribute to the ATP site; that span reads LGSGGFGSV. Aspartate 475 (proton acceptor) is an active-site residue.

The protein in the C-terminal section; belongs to the protein kinase superfamily. Ser/Thr protein kinase family. It in the N-terminal section; belongs to the leguminous lectin family.

It localises to the cell membrane. It carries out the reaction L-seryl-[protein] + ATP = O-phospho-L-seryl-[protein] + ADP + H(+). The catalysed reaction is L-threonyl-[protein] + ATP = O-phospho-L-threonyl-[protein] + ADP + H(+). Involved in resistance response to the pathogenic oomycetes Phytophthora infestans and Phytophthora capsici and to the pathogenic bacteria Pseudomonas syringae. The polypeptide is L-type lectin-domain containing receptor kinase IV.4 (Arabidopsis thaliana (Mouse-ear cress)).